A 195-amino-acid chain; its full sequence is Thymidylate kinase (195 aa).

ATP is bound at residue 7-14 (GVDTCGKS).

This sequence belongs to the thymidylate kinase family.

The enzyme catalyses dTMP + ATP = dTDP + ADP. Functionally, phosphorylation of dTMP to form dTDP in both de novo and salvage pathways of dTTP synthesis. In Helicobacter hepaticus (strain ATCC 51449 / 3B1), this protein is Thymidylate kinase.